The following is a 924-amino-acid chain: Probable dipeptidyl-aminopeptidase B (924 aa).

The segment at methionine 1–arginine 104 is disordered. The Cytoplasmic segment spans residues methionine 1–arginine 111. Positions aspartate 9–proline 23 are enriched in basic and acidic residues. Positions serine 31–isoleucine 43 are enriched in polar residues. Basic and acidic residues-rich tracts occupy residues arginine 47–threonine 58 and serine 92–arginine 104. The helical; Signal-anchor for type II membrane protein transmembrane segment at tryptophan 112 to valine 132 threads the bilayer. Residues serine 133–alanine 924 lie on the Vacuolar side of the membrane. N-linked (GlcNAc...) asparagine glycans are attached at residues asparagine 231 and asparagine 364. Serine 768 acts as the Charge relay system in catalysis. Asparagine 827 carries N-linked (GlcNAc...) asparagine glycosylation. Residues aspartate 845 and histidine 878 each act as charge relay system in the active site.

Belongs to the peptidase S9B family.

The protein localises to the vacuole membrane. It carries out the reaction Release of an N-terminal dipeptide, Xaa-Yaa-|-Zaa-, from a polypeptide, preferentially when Yaa is Pro, provided Zaa is neither Pro nor hydroxyproline.. In terms of biological role, type IV dipeptidyl-peptidase which removes N-terminal dipeptides sequentially from polypeptides having unsubstituted N-termini provided that the penultimate residue is proline. In Sordaria macrospora (strain ATCC MYA-333 / DSM 997 / K(L3346) / K-hell), this protein is Probable dipeptidyl-aminopeptidase B (DAPB).